The following is a 114-amino-acid chain: Period circadian protein (114 aa).

The disordered stretch occupies residues 23–114; sequence VTNTSIAGTG…VTLTESLLNK (92 aa). A run of 14 repeats spans residues 30 to 31, 33 to 34, 36 to 37, 38 to 39, 40 to 41, 42 to 43, 44 to 45, 46 to 47, 48 to 49, 50 to 51, 52 to 53, 54 to 55, 56 to 57, and 58 to 59. The segment covering 30-79 has biased composition (gly residues); that stretch reads GTGGTGGTGTGTGTGTGTGTGTGTGTGTGTDTGTGTGTGTETGTGTGTGT. The interval 30–87 is 28 X 2 AA approximate tandem repeats of G-[TN]; the sequence is GTGGTGGTGTGTGTGTGTGTGTGTGTGTGTDTGTGTGTGTETGTGTGTGTRNGTNSGT. A 15; approximate repeat occupies 60-61; the sequence is DT. Tandem repeats lie at residues 62 to 63, 64 to 65, 66 to 67, and 68 to 69. Residues 70 to 71 form a 20; approximate repeat; it reads ET. 4 tandem repeats follow at residues 72-73, 74-75, 76-77, and 78-79. The 25; approximate repeat unit spans residues 80–81; the sequence is RN. Positions 80–91 are enriched in low complexity; it reads RNGTNSGTKTGT. The stretch at 82-83 is repeat 26; that stretch reads GT. The 27; approximate repeat unit spans residues 84–85; it reads NS. Copy 28 of the repeat occupies 86 to 87; the sequence is GT. Positions 105 to 114 are enriched in polar residues; the sequence is VTLTESLLNK.

Forms a heterodimer with timeless (TIM); the complex then translocates into the nucleus. Post-translationally, phosphorylated with a circadian rhythmicity, probably by the double-time protein (dbt). Phosphorylation could be implicated in the stability of per monomer and in the formation of heterodimer per-tim.

It localises to the nucleus. The protein localises to the cytoplasm. It is found in the perinuclear region. In terms of biological role, essential for biological clock functions. Determines the period length of circadian and ultradian rhythms; an increase in PER dosage leads to shortened circadian rhythms and a decrease leads to lengthened circadian rhythms. Essential for the circadian rhythmicity of locomotor activity, eclosion behavior, and for the rhythmic component of the male courtship song that originates in the thoracic nervous system. The biological cycle depends on the rhythmic formation and nuclear localization of the TIM-PER complex. Light induces the degradation of TIM, which promotes elimination of PER. Nuclear activity of the heterodimer coordinatively regulates PER and TIM transcription through a negative feedback loop. Behaves as a negative element in circadian transcriptional loop. Does not appear to bind DNA, suggesting indirect transcriptional inhibition. This Drosophila orena (Fruit fly) protein is Period circadian protein (per).